The chain runs to 374 residues: MPGQSVGAVQPQRAHFDQPLHLRSGGVLPAYDLVYETYGTLNAAKSNAILVCHALSGHHHVAGHYADQPDNIGWWDNIVGPGRPLDTDKFFIVGLNNLGGCHGSTGPSSLNPATGKPWGADFPIVAVNDWVHAQARLADLLGIDSWAAVMGGSLGGMQALRWSITFPERVRNAIVIAAAPKLSAQNIAFNDVARQAILTDPDFHGGHYYEHNTRPVRGLRLARMLGHITYLSDDQMGEKFGRELRNSAFSFGYGVEFEVESYLRYQGDKFAGYFDANTYLLMTKALDYFDPSREDDGNLTATMARTQANFLIASFTTDWRFTPARSKEIVAALLANGRNVSYAEIDLNFGHDSFLMEDAHYHGVVDAYLRNIKL.

The 311-residue stretch at 47–357 (NAILVCHALS…NFGHDSFLME (311 aa)) folds into the AB hydrolase-1 domain. The active-site Nucleophile is the Ser153. Arg223 provides a ligand contact to substrate. Catalysis depends on residues Asp318 and His351. Residue Asp352 coordinates substrate.

This sequence belongs to the AB hydrolase superfamily. MetX family. As to quaternary structure, homodimer.

The protein resides in the cytoplasm. The enzyme catalyses L-homoserine + succinyl-CoA = O-succinyl-L-homoserine + CoA. It functions in the pathway amino-acid biosynthesis; L-methionine biosynthesis via de novo pathway; O-succinyl-L-homoserine from L-homoserine: step 1/1. Transfers a succinyl group from succinyl-CoA to L-homoserine, forming succinyl-L-homoserine. This chain is Homoserine O-succinyltransferase, found in Dechloromonas aromatica (strain RCB).